Consider the following 152-residue polypeptide: Arginine repressor (152 aa).

This sequence belongs to the ArgR family.

It localises to the cytoplasm. It functions in the pathway amino-acid biosynthesis; L-arginine biosynthesis [regulation]. In terms of biological role, regulates arginine biosynthesis genes. The sequence is that of Arginine repressor from Lactiplantibacillus plantarum (strain ATCC BAA-793 / NCIMB 8826 / WCFS1) (Lactobacillus plantarum).